Here is a 193-residue protein sequence, read N- to C-terminus: Thymidine kinase (193 aa).

ATP is bound by residues 9–16 (STMNAGKS) and 87–90 (DEAQ). Catalysis depends on Glu88, which acts as the Proton acceptor. 4 residues coordinate Zn(2+): Cys145, Cys147, Cys182, and His185.

This sequence belongs to the thymidine kinase family. Homotetramer.

It is found in the cytoplasm. It catalyses the reaction thymidine + ATP = dTMP + ADP + H(+). The polypeptide is Thymidine kinase (Haemophilus influenzae (strain ATCC 51907 / DSM 11121 / KW20 / Rd)).